The chain runs to 206 residues: uncharacterized protein (206 aa).

Disordered regions lie at residues R38–A88 and H160–E206. Low complexity predominate over residues Q40 to L73. Residue S68 is modified to Phosphoserine. Residues T78–A88 are compositionally biased toward polar residues. Residues S165 to S186 show a composition bias toward low complexity. Residues P192–E206 show a composition bias toward polar residues.

It is found in the cytoplasm. This is an uncharacterized protein from Saccharomyces cerevisiae (strain ATCC 204508 / S288c) (Baker's yeast).